Here is a 137-residue protein sequence, read N- to C-terminus: Proofreading thioesterase EntH (137 aa).

The active-site Nucleophile or proton acceptor is the Glu63.

This sequence belongs to the thioesterase PaaI family. As to quaternary structure, homotetramer. Dimer of dimers. Interacts specifically with the aryl carrier protein (ArCP) domain of EntB.

The protein localises to the cytoplasm. It functions in the pathway siderophore biosynthesis; enterobactin biosynthesis. Functionally, required for optimal enterobactin synthesis. Acts as a proofreading enzyme that prevents EntB misacylation by hydrolyzing the thioester bound existing between EntB and wrongly charged molecules. In Shigella sonnei (strain Ss046), this protein is Proofreading thioesterase EntH.